The following is a 324-amino-acid chain: Glyoxylate/hydroxypyruvate reductase B (324 aa).

Active-site residues include Arg237 and Glu266. The Proton donor role is filled by His285.

This sequence belongs to the D-isomer specific 2-hydroxyacid dehydrogenase family. GhrB subfamily. Homodimer.

The protein localises to the cytoplasm. It carries out the reaction glycolate + NADP(+) = glyoxylate + NADPH + H(+). The enzyme catalyses (R)-glycerate + NAD(+) = 3-hydroxypyruvate + NADH + H(+). The catalysed reaction is (R)-glycerate + NADP(+) = 3-hydroxypyruvate + NADPH + H(+). Its function is as follows. Catalyzes the NADPH-dependent reduction of glyoxylate and hydroxypyruvate into glycolate and glycerate, respectively. In Escherichia coli O9:H4 (strain HS), this protein is Glyoxylate/hydroxypyruvate reductase B.